Consider the following 504-residue polypeptide: Maturase K (504 aa).

This sequence belongs to the intron maturase 2 family. MatK subfamily.

Its subcellular location is the plastid. The protein localises to the chloroplast. Usually encoded in the trnK tRNA gene intron. Probably assists in splicing its own and other chloroplast group II introns. This chain is Maturase K, found in Cynophalla hastata (Broadleaf caper).